A 228-amino-acid chain; its full sequence is MELKEPIIAINFKTYIEATGKRALEIAKAAERVWKDTGVTIVVAPQLVDLRMIAENVEIPVFAQHIDPIKPGSHTGHVLPEAVKEAGAVGTLLNHSENRMILADLEAAISRAKEVGLITMVCSNNPAVSAAVAALDPDYVAVEPPELIGTGIPVSKAKPEVITDTVELVRKVNPKVKVLCGAGISTGEDVKKAIELGTVGVLLASGVTKAKDPEKAIRDLVSGIIRKD.

11 to 13 (NFK) is a binding site for substrate. The active-site Electrophile is the histidine 95. Glutamate 143 functions as the Proton acceptor in the catalytic mechanism. Substrate is bound by residues isoleucine 148, glycine 183, and 204 to 205 (AS).

This sequence belongs to the triosephosphate isomerase family. As to quaternary structure, homotetramer; dimer of dimers.

Its subcellular location is the cytoplasm. It catalyses the reaction D-glyceraldehyde 3-phosphate = dihydroxyacetone phosphate. The protein operates within carbohydrate biosynthesis; gluconeogenesis. It functions in the pathway carbohydrate degradation; glycolysis; D-glyceraldehyde 3-phosphate from glycerone phosphate: step 1/1. Its function is as follows. Involved in the gluconeogenesis. Catalyzes stereospecifically the conversion of dihydroxyacetone phosphate (DHAP) to D-glyceraldehyde-3-phosphate (G3P). This chain is Triosephosphate isomerase, found in Pyrococcus abyssi (strain GE5 / Orsay).